The chain runs to 149 residues: UPF0178 protein VF_0601 (149 aa).

This sequence belongs to the UPF0178 family.

This chain is UPF0178 protein VF_0601, found in Aliivibrio fischeri (strain ATCC 700601 / ES114) (Vibrio fischeri).